The chain runs to 298 residues: Acetylglutamate kinase (298 aa).

Substrate is bound by residues 69–70 (GG), R91, and N191.

It belongs to the acetylglutamate kinase family. ArgB subfamily.

The protein resides in the cytoplasm. It catalyses the reaction N-acetyl-L-glutamate + ATP = N-acetyl-L-glutamyl 5-phosphate + ADP. It participates in amino-acid biosynthesis; L-arginine biosynthesis; N(2)-acetyl-L-ornithine from L-glutamate: step 2/4. Its function is as follows. Catalyzes the ATP-dependent phosphorylation of N-acetyl-L-glutamate. The chain is Acetylglutamate kinase from Neisseria meningitidis serogroup C (strain 053442).